The primary structure comprises 420 residues: Pre-mRNA-splicing factor RBM22 (420 aa).

At A2 the chain carries N-acetylalanine. Phosphoserine is present on residues S4 and S102. Residues K139 and K149 each participate in a glycyl lysine isopeptide (Lys-Gly) (interchain with G-Cter in SUMO2) cross-link. The C3H1-type zinc finger occupies 159–186; it reads RNRPHICSFWVKGECKRGEECPYRHEKP. K212 carries the N6-acetyllysine modification. The RRM domain occupies 232–305; that stretch reads TTLYVGGLGD…RRLNVKWGRS (74 aa). A Glycyl lysine isopeptide (Lys-Gly) (interchain with G-Cter in SUMO2) cross-link involves residue K290. Disordered stretches follow at residues 303–343 and 372–420; these read GRSQ…AAEE and APPP…HSSP. Residues 309–318 show a composition bias toward basic and acidic residues; that stretch reads RGKEKEKDGT.

It belongs to the SLT11 family. In terms of assembly, component of the pre-catalytic and catalytic spliceosome complexes. Component of the postcatalytic spliceosome P complex. Interacts with PDCD6; the interaction induces translocation of PDCD6 in the cytoplasm. Interacts with PPIL1.

Its subcellular location is the nucleus. It is found in the cytoplasm. Required for pre-mRNA splicing as component of the activated spliceosome. Involved in the first step of pre-mRNA splicing. Binds directly to the internal stem-loop (ISL) domain of the U6 snRNA and to the pre-mRNA intron near the 5' splice site during the activation and catalytic phases of the spliceosome cycle. Involved in both translocations of the nuclear SLU7 to the cytoplasm and the cytosolic calcium-binding protein PDCD6 to the nucleus upon cellular stress responses. This chain is Pre-mRNA-splicing factor RBM22 (RBM22), found in Homo sapiens (Human).